The chain runs to 1895 residues: Probable WRKY transcription factor 19 (1895 aa).

The segment at 1–85 is disordered; sequence MSEKEELPLT…SGSGLSQQLN (85 aa). Over residues 10-22 the composition is skewed to polar residues; the sequence is TLTSIGAATATSD. Residues 28-39 are compositionally biased toward low complexity; the sequence is GSSGEGISSSSS. Positions 46 to 62 are enriched in polar residues; the sequence is MQNSPTGLMISQSSSMC. A compositionally biased stretch (low complexity) spans 75–85; sequence SSGSGLSQQLN. A PAH domain is found at 291 to 371; that stretch reads RPLTIDGGGN…LGFNTYLSKE (81 aa). Polar residues predominate over residues 408–417; it reads ANMQPQTEYP. Disordered regions lie at residues 408–442, 517–538, and 580–620; these read ANMQ…SSLL, YKDR…TYLS, and EASD…ADAS. Residues 418-427 show a composition bias toward low complexity; that stretch reads SSSAVQSFSS. The segment covering 428–442 has biased composition (polar residues); the sequence is GQPQIPTSAPDSSLL. The segment at residues 462–526 is a DNA-binding region (WRKY 1); that stretch reads NVDKQVNDGY…YKDRHNHEPP (65 aa). Positions 635-700 form a DNA-binding region, WRKY 2; it reads SEVDNLDDGY…SLCRRGISVY (66 aa). One can recognise a TIR domain in the interval 666–808; sequence KDYDVVIRYG…EIVRDALKVL (143 aa). The NB-ARC domain occupies 800–1087; sequence IVRDALKVLC…LDGCGFSAHV (288 aa). 844 to 851 contacts ATP; sequence GTVGIGKT. LRR repeat units lie at residues 1206–1227, 1228–1249, 1259–1281, 1282–1304, 1306–1328, 1329–1351, 1352–1371, 1373–1395, 1397–1419, and 1421–1442; these read KLRL…FNPE, NLVE…KKAR, KLKK…SSAT, NLEH…ISYL, KLVF…VDLE, SLEV…SPNV, KELY…IKNL, LLEK…IYKL, HLET…SRRM, and CLRF…ISYL. A disordered region spans residues 1562–1583; the sequence is ETVAPPSSSSEAREEEVETEET. Residues 1626–1877 form the Protein kinase domain; sequence WQKGQLLGRG…AAELLNHPFV (252 aa). Residues 1632–1640 and Lys-1654 contribute to the ATP site; that span reads LGRGSLGSV. Asp-1758 is an active-site residue.

This sequence belongs to the disease resistance X-TIR-NB-LRR-X family.

It is found in the nucleus. Its function is as follows. Transcription factor. Interacts specifically with the W box (5'-(T)TGAC[CT]-3'), a frequently occurring elicitor-responsive cis-acting element. May act also as a disease resistance protein with a serine/threonine-protein kinase activity. The protein is Probable WRKY transcription factor 19 (WRKY19) of Arabidopsis thaliana (Mouse-ear cress).